Consider the following 181-residue polypeptide: Trafficking protein particle complex subunit 3 homolog (181 aa).

Cys70 is lipidated: S-palmitoyl cysteine.

The protein belongs to the TRAPP small subunits family. BET3 subfamily. Homodimer. Part of the multisubunit TRAPP (transport protein particle) complex.

The protein localises to the golgi apparatus. Its subcellular location is the cis-Golgi network. It localises to the endoplasmic reticulum. May play a role in vesicular transport from endoplasmic reticulum to Golgi. Required for the systemic spread of the RNAi response. The protein is Trafficking protein particle complex subunit 3 homolog of Caenorhabditis briggsae.